Consider the following 401-residue polypeptide: Hemorrhagic metalloproteinase-disintegrin-like kaouthiagin (401 aa).

The 195-residue stretch at 14 to 208 (KYIEFYVIVD…DRPQCILNKP (195 aa)) folds into the Peptidase M12B domain. Residues Glu17 and Asp101 each coordinate Ca(2+). Residue Asn112 is glycosylated (N-linked (GlcNAc...) asparagine). Intrachain disulfides connect Cys125-Cys203, Cys164-Cys187, and Cys166-Cys171. Position 149 (His149) interacts with Zn(2+). Glu150 is a catalytic residue. Zn(2+)-binding residues include His153 and His159. Ca(2+)-binding residues include Cys203, Asn206, Ile218, Asn221, Phe223, Glu225, Glu228, and Asp231. Residues 216 to 285 (PAICGNYFVE…ECPTDSLQRN (70 aa)) enclose the Disintegrin domain. Intrachain disulfides connect Cys219–Cys248, Cys230–Cys243, Cys232–Cys238, Cys257–Cys277, Cys264–Cys296, Cys289–Cys301, Cys308–Cys358, Cys323–Cys366, Cys336–Cys346, Cys353–Cys389, and Cys383–Cys394. The D/ECD-tripeptide motif lies at 263 to 265 (DCD). The Ca(2+) site is built by Asp265, Leu266, Glu268, and Asp280.

It belongs to the venom metalloproteinase (M12B) family. P-III subfamily. P-IIIa sub-subfamily. Monomer. It depends on Zn(2+) as a cofactor. In terms of tissue distribution, expressed by the venom gland.

The protein resides in the secreted. Snake venom zinc protease that inhibits hemostasis by binding and cleaving the vWF in humans. Also has and inhibitory effect on the collagen-induced platelet aggregation. The chain is Hemorrhagic metalloproteinase-disintegrin-like kaouthiagin from Naja kaouthia (Monocled cobra).